The chain runs to 125 residues: Large ribosomal subunit protein bL21 (125 aa).

Belongs to the bacterial ribosomal protein bL21 family. As to quaternary structure, part of the 50S ribosomal subunit. Contacts protein L20.

Functionally, this protein binds to 23S rRNA in the presence of protein L20. The chain is Large ribosomal subunit protein bL21 from Synechococcus sp. (strain CC9311).